We begin with the raw amino-acid sequence, 1239 residues long: Protein strawberry notch homolog 1 (1239 aa).

The interval 684 to 837 is disordered; the sequence is AQSNNNSPRD…SANSNTNSSF (154 aa). Positions 694–713 are enriched in basic and acidic residues; sequence SPCKENKIKKRKGEEVSREA. Residues 728–744 show a composition bias toward acidic residues; it reads DESESESDASDNEESDN. Residues 778 to 790 are compositionally biased toward basic residues; sequence KEHKKVKEKKKKK. Residues 814–837 show a composition bias toward low complexity; sequence FTSTVGTTTSSTNASANSNTNSSF. A coiled-coil region spans residues 838–866; sequence VTSQDAVERAQQMKKELLDKLEKLAEDLP.

It belongs to the SBNO family.

The protein resides in the nucleus. In terms of biological role, plays a crucial role in the regulation of neural stem cells (NSCs) proliferation. Enhances the phosphorylation of GSK3B through the PI3K-Akt signaling pathway, thereby upregulating the Wnt/beta-catenin signaling pathway and promoting the proliferation of NSCs. The sequence is that of Protein strawberry notch homolog 1 (SBNO1) from Gallus gallus (Chicken).